We begin with the raw amino-acid sequence, 360 residues long: MKKFFALALVAPLLISCSSSTKKGDTYNEAWVKDTNGFDILMGQFAHNIENLWGFKEVLIAGPKDYVKYTDQYQTRSHINFDDGTITVETIAGTEPAAHLRRAIIKTLLMGDDPGSVDLYSDVDDIQISREPFLYGQVVDNTGQPIRWEGRATNFADYLLKTRLKSRSNGLRIIYSVTINLVPNHLDKRAHKYVGMVRQAARKYGVDESLILAIMQTESSFNPYAVSRSDALGLMQVVQHTAGKDVFRSQGKSGTPGRSFLFDPASNIDTGTAYLAMLNNVYLGGIDNPTSRRYAVITAYNGGAGSVLRVFSNDKVQAANIINSMSPGDVYQTLTTRHPSAESRRYLYKVNATQKSYRRK.

The N-terminal stretch at 1-16 (MKKFFALALVAPLLIS) is a signal peptide. Residue Cys17 is the site of N-palmitoyl cysteine attachment. Cys17 carries S-diacylglycerol cysteine lipidation.

It belongs to the transglycosylase Slt family.

Its subcellular location is the cell outer membrane. The catalysed reaction is Exolytic cleavage of the (1-&gt;4)-beta-glycosidic linkage between N-acetylmuramic acid (MurNAc) and N-acetylglucosamine (GlcNAc) residues in peptidoglycan, from either the reducing or the non-reducing ends of the peptidoglycan chains, with concomitant formation of a 1,6-anhydrobond in the MurNAc residue.. Its function is as follows. Murein-degrading enzyme. May play a role in recycling of muropeptides during cell elongation and/or cell division. This Citrobacter koseri (strain ATCC BAA-895 / CDC 4225-83 / SGSC4696) protein is Membrane-bound lytic murein transglycosylase C.